Consider the following 265-residue polypeptide: Hydroxyethylthiazole kinase (265 aa).

Met36 serves as a coordination point for substrate. Residues Lys112 and Ser160 each coordinate ATP. Gly187 contacts substrate.

It belongs to the Thz kinase family. The cofactor is Mg(2+).

The catalysed reaction is 5-(2-hydroxyethyl)-4-methylthiazole + ATP = 4-methyl-5-(2-phosphooxyethyl)-thiazole + ADP + H(+). It functions in the pathway cofactor biosynthesis; thiamine diphosphate biosynthesis; 4-methyl-5-(2-phosphoethyl)-thiazole from 5-(2-hydroxyethyl)-4-methylthiazole: step 1/1. Its function is as follows. Catalyzes the phosphorylation of the hydroxyl group of 4-methyl-5-beta-hydroxyethylthiazole (THZ). The polypeptide is Hydroxyethylthiazole kinase (Clostridium perfringens (strain SM101 / Type A)).